A 240-amino-acid polypeptide reads, in one-letter code: Coiled-coil domain-containing protein 152 (240 aa).

A coiled-coil region spans residues M55–D223.

The sequence is that of Coiled-coil domain-containing protein 152 (CCDC152) from Bos taurus (Bovine).